Here is a 167-residue protein sequence, read N- to C-terminus: MASPRTITIMALSVALGLFFVFMGTIKLTPRLSKDAYSEMKRAYKSYVRALPLLKKMGINSILLRKSIGALEVACGIVMTLVPGRPKDVANFFLLLLVLAVLFFHQLVGDPLKRYAHALVFGILLTCRLLIARKPEDRSSEKKALPESAEEQPSLYEKAPQGKVKVS.

The Cytoplasmic segment spans residues 1–5 (MASPR). The chain crosses the membrane as a helical span at residues 6-26 (TITIMALSVALGLFFVFMGTI). Residues 27–61 (KLTPRLSKDAYSEMKRAYKSYVRALPLLKKMGINS) lie on the Lumenal side of the membrane. Positions 43–54 (AYKSYVRALPLL) are interaction with NGFR. A helical transmembrane segment spans residues 62 to 82 (ILLRKSIGALEVACGIVMTLV). At 83–88 (PGRPKD) the chain is on the cytoplasmic side. Residues 89–109 (VANFFLLLLVLAVLFFHQLVG) form a helical membrane-spanning segment. Over 110–114 (DPLKR) the chain is Lumenal. Residues 115–132 (YAHALVFGILLTCRLLIA) form a helical membrane-spanning segment. Residues 133-167 (RKPEDRSSEKKALPESAEEQPSLYEKAPQGKVKVS) are Cytoplasmic-facing. A compositionally biased stretch (basic and acidic residues) spans 135–145 (PEDRSSEKKAL). The disordered stretch occupies residues 135 to 167 (PEDRSSEKKALPESAEEQPSLYEKAPQGKVKVS).

It belongs to the DoxX family. As to quaternary structure, may interact with NGFR. Interacts with RPN1, RPN2 and CANX. As to expression, brain (at protein level). Expressed in the spinal cord dorsal horn (at protein level).

It is found in the peroxisome membrane. Its subcellular location is the cytoplasmic vesicle. It localises to the endoplasmic reticulum membrane. In terms of biological role, molecular chaperone which mediates the proper assembly and functional expression of the nicotinic acetylcholine receptors (nAChRs) throughout the brain. Essential for the proper folding, assembly, function and surface trafficking of alpha-7 (CHRNA7), alpha-4-beta-2, alpha-3-beta-2 and alpha-3-beta-4 receptors. Stably associates with ribophorin-1 (RPN1) and ribophorin-2 (RPN2) (components of the oligosaccharyl transferase (OST) complex) and with calnexin (CANX), both of which are critical for NACHO-mediated effects on CHRNA7 assembly and function. Facilitates the proper folding and assembly of alpha-6-beta-2 and alpha-6-beta-2-beta-3 receptors and acts at early stages of the nAChRs subunit assembly. Promotes the expression of the alpha-4(2):beta-2(3) stoichiometric form over the alpha-4(3):beta-2(2) form. In Mus musculus (Mouse), this protein is Novel acetylcholine receptor chaperone.